The chain runs to 789 residues: MDVSGQETDWRSAAFRQKLVSQIEDAMRKAGVAHSKSSKDMESHVFLKAKTRDEYLSLVARLIIHFRDIHNKKSQASVSDPMNALQSLTGGPTPGAAGIGMPPRGPGQSLGGMGGLGAMGQPLPLSGQPPPGTSGMAPHGMAVVSTATPQTQLQLQQVALQQQQQQQQQQQFQQQQAALQQQQQQQQQQQQQQQFQAQQNAMQQQFQAVVQQQQLQQQQQQQHLIKLHHQSQQQQIQQQQLQRMAQLQLQQQQQQQQQQALQAQPPMQQPSMQQPQPPPSQALPQQLSQLHHPQHHQPPPQAQQSPIAQNQPPQIPPQSQSQPLVSQAQALPGPMLYAAQQQLKFVRAPMVVQQPQVQPQVQQVQPQVQPQAAVQAAQSAQMVAPGVQMIAEALAQGGMHVRARFPPTSTMSAGPSSSISLGGQPTTQVSQSSLTMLSSPSPGQQVQTPQSMPPPPQPSPQPGSQPNSNVSSGPAPSPSSFLPSPSPQPSQSPVTARTPQNFSVPSPGPLNTPVNPSSVMSPAGSSQAEEQQYLDKLKQLSKYIEPLRRMINKIDKNEDRKKDLSKMKSLLDILTDPSKRCPLKTLQKCEIALEKLKNDMAVPTPPPPPVLPTKQQDLCQPLLDAVLANIRSPVFNHSLYRTFVPAMMAIHGPPIVSPVVCSRKRRFEEDERQSIPNVLQGEVARLDPKFLVNLDPSHCSNNGTVHLICKLDDKDLPSVPPLELSVPADYPAQSPMWIDRQWQYDANPFLQSVHRCMTSRLLQLPDKHSVTALLNTWAQSIHQACLSAA.

Residues 9–73 form an interaction with SREBF1 region; it reads DWRSAAFRQK…IHFRDIHNKK (65 aa). Disordered regions lie at residues 88-140 and 257-326; these read LTGG…APHG and QQQA…PLVS. The span at 89 to 102 shows a compositional bias: low complexity; that stretch reads TGGPTPGAAGIGMP. The span at 108–118 shows a compositional bias: gly residues; the sequence is QSLGGMGGLGA. Composition is skewed to low complexity over residues 257–274, 282–291, and 302–326; these read QQQALQAQPPMQQPSMQQ, ALPQQLSQLH, and AQQSPIAQNQPPQIPPQSQSQPLVS. At arginine 347 the chain carries Asymmetric dimethylarginine. A disordered region spans residues 404 to 531; that stretch reads RFPPTSTMSA…PAGSSQAEEQ (128 aa). A compositionally biased stretch (polar residues) spans 407-426; it reads PTSTMSAGPSSSISLGGQPT. Residues 427 to 450 are compositionally biased toward low complexity; sequence TQVSQSSLTMLSSPSPGQQVQTPQ. Residues 451 to 463 show a composition bias toward pro residues; that stretch reads SMPPPPQPSPQPG. A compositionally biased stretch (low complexity) spans 464–483; that stretch reads SQPNSNVSSGPAPSPSSFLP. Composition is skewed to polar residues over residues 494–504 and 512–530; these read VTARTPQNFSV and TPVNPSSVMSPAGSSQAEE. The short motif at 548–565 is the Nuclear localization signal element; it reads RRMINKIDKNEDRKKDLS. Residue threonine 604 is modified to Phosphothreonine.

Belongs to the Mediator complex subunit 15 family. As to quaternary structure, component of the Mediator complex, which is composed of MED1, MED4, MED6, MED7, MED8, MED9, MED10, MED11, MED12, MED13, MED13L, MED14, MED15, MED16, MED17, MED18, MED19, MED20, MED21, MED22, MED23, MED24, MED25, MED26, MED27, MED29, MED30, MED31, CCNC, CDK8 and CDC2L6/CDK11. The MED12, MED13, CCNC and CDK8 subunits form a distinct module termed the CDK8 module. Mediator containing the CDK8 module is less active than Mediator lacking this module in supporting transcriptional activation. Individual preparations of the Mediator complex lacking one or more distinct subunits have been variously termed ARC, CRSP, DRIP, PC2, SMCC and TRAP. Interacts with SMAD2, SMAD3, SREBF1 and SREBF2. Interacts with WWTR1. Interacts with TRIM11. In terms of processing, ubiquitinated by TRIM11, leading to proteasomal degradation.

It is found in the cytoplasm. Its subcellular location is the nucleus. Component of the Mediator complex, a coactivator involved in the regulated transcription of nearly all RNA polymerase II-dependent genes. Mediator functions as a bridge to convey information from gene-specific regulatory proteins to the basal RNA polymerase II transcription machinery. Mediator is recruited to promoters by direct interactions with regulatory proteins and serves as a scaffold for the assembly of a functional preinitiation complex with RNA polymerase II and the general transcription factors. Required for cholesterol-dependent gene regulation. Positively regulates the Nodal signaling pathway. This is Mediator of RNA polymerase II transcription subunit 15 (Med15) from Mus musculus (Mouse).